Consider the following 88-residue polypeptide: Small cysteine-rich outer membrane protein OmcA (88 aa).

The first 18 residues, 1-18 (MKKTALLAALCSVVSLSS), serve as a signal peptide directing secretion. C19 is lipidated: N-palmitoyl cysteine. C19 carries S-diacylglycerol cysteine lipidation.

In terms of assembly, part of a disulfide cross-linked outer membrane complex (COMC) composed of the major outer membrane porin (MOMP), the small cysteine-rich protein (OmcA) and the large cysteine-rich periplasmic protein (OmcB).

Its subcellular location is the cell outer membrane. Its function is as follows. In elementary bodies (EBs, the infectious stage, which is able to survive outside the host cell) provides the structural integrity of the outer envelope through disulfide cross-links with the large cysteine-rich periplasmic protein and the major outer membrane porin. It has been described in publications as the Sarkosyl-insoluble COMC (Chlamydia outer membrane complex), and serves as the functional equivalent of peptidoglycan. This chain is Small cysteine-rich outer membrane protein OmcA (omcA), found in Chlamydia muridarum (strain MoPn / Nigg).